The chain runs to 101 residues: Phosphoribosyl-AMP cyclohydrolase (101 aa).

Aspartate 71 contacts Mg(2+). Cysteine 72 serves as a coordination point for Zn(2+). 2 residues coordinate Mg(2+): aspartate 73 and aspartate 75. Zn(2+) contacts are provided by cysteine 88 and cysteine 95.

The protein belongs to the PRA-CH family. In terms of assembly, homodimer. The cofactor is Mg(2+). Zn(2+) is required as a cofactor.

It localises to the cytoplasm. It catalyses the reaction 1-(5-phospho-beta-D-ribosyl)-5'-AMP + H2O = 1-(5-phospho-beta-D-ribosyl)-5-[(5-phospho-beta-D-ribosylamino)methylideneamino]imidazole-4-carboxamide. It participates in amino-acid biosynthesis; L-histidine biosynthesis; L-histidine from 5-phospho-alpha-D-ribose 1-diphosphate: step 3/9. Its function is as follows. Catalyzes the hydrolysis of the adenine ring of phosphoribosyl-AMP. The protein is Phosphoribosyl-AMP cyclohydrolase of Bacillus cereus (strain Q1).